Consider the following 180-residue polypeptide: NADH-quinone oxidoreductase subunit I (180 aa).

4Fe-4S ferredoxin-type domains lie at 50–80 and 90–119; these read LTRD…LQKT and EFFR…LTPD. 8 residues coordinate [4Fe-4S] cluster: C60, C63, C66, C70, C99, C102, C105, and C109.

This sequence belongs to the complex I 23 kDa subunit family. NDH-1 is composed of 13 different subunits. Subunits NuoA, H, J, K, L, M, N constitute the membrane sector of the complex. [4Fe-4S] cluster serves as cofactor.

The protein localises to the cell inner membrane. It carries out the reaction a quinone + NADH + 5 H(+)(in) = a quinol + NAD(+) + 4 H(+)(out). In terms of biological role, NDH-1 shuttles electrons from NADH, via FMN and iron-sulfur (Fe-S) centers, to quinones in the respiratory chain. The immediate electron acceptor for the enzyme in this species is believed to be ubiquinone. Couples the redox reaction to proton translocation (for every two electrons transferred, four hydrogen ions are translocated across the cytoplasmic membrane), and thus conserves the redox energy in a proton gradient. The chain is NADH-quinone oxidoreductase subunit I from Shigella dysenteriae serotype 1 (strain Sd197).